Reading from the N-terminus, the 341-residue chain is S-adenosylmethionine:tRNA ribosyltransferase-isomerase (341 aa).

It belongs to the QueA family. In terms of assembly, monomer.

It localises to the cytoplasm. It catalyses the reaction 7-aminomethyl-7-carbaguanosine(34) in tRNA + S-adenosyl-L-methionine = epoxyqueuosine(34) in tRNA + adenine + L-methionine + 2 H(+). The protein operates within tRNA modification; tRNA-queuosine biosynthesis. In terms of biological role, transfers and isomerizes the ribose moiety from AdoMet to the 7-aminomethyl group of 7-deazaguanine (preQ1-tRNA) to give epoxyqueuosine (oQ-tRNA). This chain is S-adenosylmethionine:tRNA ribosyltransferase-isomerase, found in Clostridium botulinum (strain Kyoto / Type A2).